Reading from the N-terminus, the 216-residue chain is FMN-dependent NADH:quinone oxidoreductase (216 aa).

FMN is bound by residues 15–17 and 139–142; these read SVS and SRGG.

Belongs to the azoreductase type 1 family. In terms of assembly, homodimer. It depends on FMN as a cofactor.

The enzyme catalyses 2 a quinone + NADH + H(+) = 2 a 1,4-benzosemiquinone + NAD(+). It catalyses the reaction N,N-dimethyl-1,4-phenylenediamine + anthranilate + 2 NAD(+) = 2-(4-dimethylaminophenyl)diazenylbenzoate + 2 NADH + 2 H(+). Functionally, quinone reductase that provides resistance to thiol-specific stress caused by electrophilic quinones. In terms of biological role, also exhibits azoreductase activity. Catalyzes the reductive cleavage of the azo bond in aromatic azo compounds to the corresponding amines. The sequence is that of FMN-dependent NADH:quinone oxidoreductase from Acidovorax ebreus (strain TPSY) (Diaphorobacter sp. (strain TPSY)).